A 336-amino-acid polypeptide reads, in one-letter code: Growth hormone-regulated TBC protein 1 (336 aa).

Residues 68 to 258 (GVPLEHRARV…RIWDCLFNEG (191 aa)) form the Rab-GAP TBC domain.

Its function is as follows. May act as a GTPase-activating protein for Rab family protein(s). The protein is Growth hormone-regulated TBC protein 1 (GRTP1) of Homo sapiens (Human).